Consider the following 641-residue polypeptide: Histone-lysine N-methyltransferase set9 (641 aa).

The 115-residue stretch at 120–234 (CPFEVTTTNR…IGEEITVSYG (115 aa)) folds into the SET domain. Disordered stretches follow at residues 261–388 (NLAP…STAA) and 596–628 (GVSFGLTPTPELSDMRSETPDSEALDERGNTRV). Residues 348–359 (AGDSGKSSSAGD) are compositionally biased toward low complexity. Over residues 361–381 (VESSGTDSESLTSITPQESQR) the composition is skewed to polar residues. A compositionally biased stretch (basic and acidic residues) spans 608–625 (SDMRSETPDSEALDERGN).

The protein belongs to the class V-like SAM-binding methyltransferase superfamily. Histone-lysine methyltransferase family. Suvar4-20 subfamily.

It is found in the nucleus. The protein resides in the chromosome. It catalyses the reaction L-lysyl(20)-[histone H4] + 3 S-adenosyl-L-methionine = N(6),N(6),N(6)-trimethyl-L-lysyl(20)-[histone H4] + 3 S-adenosyl-L-homocysteine + 3 H(+). Functionally, histone methyltransferase that trimethylates 'Lys-20' of histone H4 to form H4K20me3. This chain is Histone-lysine N-methyltransferase set9 (set9), found in Emericella nidulans (strain FGSC A4 / ATCC 38163 / CBS 112.46 / NRRL 194 / M139) (Aspergillus nidulans).